A 320-amino-acid chain; its full sequence is Lipoyl synthase (320 aa).

Residues M1–K28 form a disordered region. Residues A19–K28 show a composition bias toward basic and acidic residues. The [4Fe-4S] cluster site is built by C59, C64, C70, C85, C89, C92, and S298. Residues W71 to L287 form the Radical SAM core domain.

The protein belongs to the radical SAM superfamily. Lipoyl synthase family. The cofactor is [4Fe-4S] cluster.

The protein localises to the cytoplasm. It carries out the reaction [[Fe-S] cluster scaffold protein carrying a second [4Fe-4S](2+) cluster] + N(6)-octanoyl-L-lysyl-[protein] + 2 oxidized [2Fe-2S]-[ferredoxin] + 2 S-adenosyl-L-methionine + 4 H(+) = [[Fe-S] cluster scaffold protein] + N(6)-[(R)-dihydrolipoyl]-L-lysyl-[protein] + 4 Fe(3+) + 2 hydrogen sulfide + 2 5'-deoxyadenosine + 2 L-methionine + 2 reduced [2Fe-2S]-[ferredoxin]. The protein operates within protein modification; protein lipoylation via endogenous pathway; protein N(6)-(lipoyl)lysine from octanoyl-[acyl-carrier-protein]: step 2/2. Functionally, catalyzes the radical-mediated insertion of two sulfur atoms into the C-6 and C-8 positions of the octanoyl moiety bound to the lipoyl domains of lipoate-dependent enzymes, thereby converting the octanoylated domains into lipoylated derivatives. The protein is Lipoyl synthase of Bartonella henselae (strain ATCC 49882 / DSM 28221 / CCUG 30454 / Houston 1) (Rochalimaea henselae).